The sequence spans 290 residues: Elongation factor Ts (290 aa).

The segment at 81 to 84 (TDFV) is involved in Mg(2+) ion dislocation from EF-Tu.

The protein belongs to the EF-Ts family.

It is found in the cytoplasm. In terms of biological role, associates with the EF-Tu.GDP complex and induces the exchange of GDP to GTP. It remains bound to the aminoacyl-tRNA.EF-Tu.GTP complex up to the GTP hydrolysis stage on the ribosome. In Vesicomyosocius okutanii subsp. Calyptogena okutanii (strain HA), this protein is Elongation factor Ts.